The primary structure comprises 77 residues: Conotoxin King-Kong 1 (77 aa).

The N-terminal stretch at 1–22 (MKLTCMMIVAVLFLTAWTFATA) is a signal peptide. The propeptide occupies 23–49 (DDSSNGLENLFSKAHHEMKNPEASKLN). 3 disulfide bridges follow: cysteine 52–cysteine 67, cysteine 59–cysteine 71, and cysteine 66–cysteine 76. Methionine 61 is modified (methionine sulfoxide; partial).

This sequence belongs to the conotoxin O1 superfamily. In terms of tissue distribution, expressed by the venom duct.

It is found in the secreted. The sequence is that of Conotoxin King-Kong 1 from Conus textile (Cloth-of-gold cone).